The chain runs to 479 residues: RAC-gamma serine/threonine-protein kinase (479 aa).

Serine 2 is modified (N-acetylserine). Positions 5-107 (TIVKEDWVQK…WTEAIQAVAD (103 aa)) constitute a PH domain. An intrachain disulfide couples cysteine 59 to cysteine 76. Residues 148-405 (FDYLKLLGKG…PKEIMRHSFF (258 aa)) form the Protein kinase domain. ATP contacts are provided by residues 154-162 (LGKGTFGKV) and lysine 177. The active-site Proton acceptor is the aspartate 271. Residues cysteine 293 and cysteine 307 are joined by a disulfide bond. O-linked (GlcNAc) threonine glycosylation is present at threonine 302. Threonine 305 carries the phosphothreonine; by PDPK1 modification. O-linked (GlcNAc) threonine glycosylation occurs at threonine 309. In terms of domain architecture, AGC-kinase C-terminal spans 406–479 (SGVNWQDVYD…QFSYSASGRE (74 aa)). A disordered region spans residues 446–479 (ITPPEKDDDDGMDCMDNERRPHFPQFSYSASGRE). Threonine 447 carries the post-translational modification Phosphothreonine. The segment covering 451–460 (KDDDDGMDCM) has biased composition (acidic residues). Residue serine 472 is modified to Phosphoserine; by PKC/PRKCZ. Serine 472 carries an O-linked (GlcNAc) serine; alternate glycan.

The protein belongs to the protein kinase superfamily. AGC Ser/Thr protein kinase family. RAC subfamily. As to quaternary structure, interacts (via PH domain) with TCL1A; this enhances AKT3 phosphorylation and activation. Interacts with TRAF6. Interacts with KCTD20. Interacts with BTBD10. In terms of processing, phosphorylation on Thr-305 and Ser-472 is required for full activity. Phosphorylation of the activation loop at Thr-305 by PDPK1/PDK1 is a prerequisite for full activation. Phosphorylation at Ser-472 by mTORC2 in response to growth factors plays a key role in AKT1 activation by facilitating subsequent phosphorylation of the activation loop by PDPK1/PDK1. Ubiquitinated. When fully phosphorylated and translocated into the nucleus, undergoes 'Lys-48'-polyubiquitination catalyzed by TTC3, leading to its degradation by the proteasome. Post-translationally, O-GlcNAcylation at Thr-302 and Thr-309 inhibits activating phosphorylation at Thr-305 via disrupting the interaction between AKT and PDPK1/PDK1.

It localises to the nucleus. Its subcellular location is the cytoplasm. The protein resides in the membrane. The enzyme catalyses L-seryl-[protein] + ATP = O-phospho-L-seryl-[protein] + ADP + H(+). The catalysed reaction is L-threonyl-[protein] + ATP = O-phospho-L-threonyl-[protein] + ADP + H(+). Two specific sites, one in the kinase domain (Thr-305) and the other in the C-terminal regulatory region (Ser-472), need to be phosphorylated for its full activation. IGF-1 leads to the activation of AKT3, which may play a role in regulating cell survival. Its function is as follows. AKT3 is one of 3 closely related serine/threonine-protein kinases (AKT1, AKT2 and AKT3) called the AKT kinase, and which regulate many processes including metabolism, proliferation, cell survival, growth and angiogenesis. This is mediated through serine and/or threonine phosphorylation of a range of downstream substrates. Over 100 substrate candidates have been reported so far, but for most of them, no isoform specificity has been reported. AKT3 is the least studied AKT isoform. It plays an important role in brain development and is crucial for the viability of malignant glioma cells. AKT3 isoform may also be the key molecule in up-regulation and down-regulation of MMP13 via IL13. Required for the coordination of mitochondrial biogenesis with growth factor-induced increases in cellular energy demands. Down-regulation by RNA interference reduces the expression of the phosphorylated form of BAD, resulting in the induction of caspase-dependent apoptosis. The polypeptide is RAC-gamma serine/threonine-protein kinase (Akt3) (Rattus norvegicus (Rat)).